Reading from the N-terminus, the 101-residue chain is Large ribosomal subunit protein uL23 (101 aa).

It belongs to the universal ribosomal protein uL23 family. In terms of assembly, part of the 50S ribosomal subunit. Contacts protein L29, and trigger factor when it is bound to the ribosome.

In terms of biological role, one of the early assembly proteins it binds 23S rRNA. One of the proteins that surrounds the polypeptide exit tunnel on the outside of the ribosome. Forms the main docking site for trigger factor binding to the ribosome. The polypeptide is Large ribosomal subunit protein uL23 (Micrococcus luteus (strain ATCC 4698 / DSM 20030 / JCM 1464 / CCM 169 / CCUG 5858 / IAM 1056 / NBRC 3333 / NCIMB 9278 / NCTC 2665 / VKM Ac-2230) (Micrococcus lysodeikticus)).